Reading from the N-terminus, the 240-residue chain is Pyridoxine 5'-phosphate synthase (240 aa).

Asn-7 contacts 3-amino-2-oxopropyl phosphate. 9–10 (DH) is a 1-deoxy-D-xylulose 5-phosphate binding site. 3-amino-2-oxopropyl phosphate is bound at residue Arg-18. The active-site Proton acceptor is His-43. 1-deoxy-D-xylulose 5-phosphate-binding residues include Arg-45 and His-50. Residue Glu-70 is the Proton acceptor of the active site. Thr-100 contacts 1-deoxy-D-xylulose 5-phosphate. His-191 serves as the catalytic Proton donor. 3-amino-2-oxopropyl phosphate contacts are provided by residues Gly-192 and 213–214 (GH).

It belongs to the PNP synthase family. Homooctamer; tetramer of dimers.

The protein localises to the cytoplasm. The enzyme catalyses 3-amino-2-oxopropyl phosphate + 1-deoxy-D-xylulose 5-phosphate = pyridoxine 5'-phosphate + phosphate + 2 H2O + H(+). It functions in the pathway cofactor biosynthesis; pyridoxine 5'-phosphate biosynthesis; pyridoxine 5'-phosphate from D-erythrose 4-phosphate: step 5/5. Catalyzes the complicated ring closure reaction between the two acyclic compounds 1-deoxy-D-xylulose-5-phosphate (DXP) and 3-amino-2-oxopropyl phosphate (1-amino-acetone-3-phosphate or AAP) to form pyridoxine 5'-phosphate (PNP) and inorganic phosphate. The chain is Pyridoxine 5'-phosphate synthase from Coxiella burnetii (strain Dugway 5J108-111).